The sequence spans 471 residues: Alpha-1,3/1,6-mannosyltransferase alg-2 (471 aa).

N-linked (GlcNAc...) asparagine glycosylation is found at Asn178 and Asn279. A helical transmembrane segment spans residues 446 to 466; that stretch reads GMILLVVGAAVAAVAGVISAV.

This sequence belongs to the glycosyltransferase group 1 family. Glycosyltransferase 4 subfamily.

It localises to the endoplasmic reticulum membrane. The enzyme catalyses a beta-D-Man-(1-&gt;4)-beta-D-GlcNAc-(1-&gt;4)-alpha-D-GlcNAc-diphospho-di-trans,poly-cis-dolichol + GDP-alpha-D-mannose = an alpha-D-Man-(1-&gt;3)-beta-D-Man-(1-&gt;4)-beta-D-GlcNAc-(1-&gt;4)-alpha-D-GlcNAc-diphospho-di-trans,poly-cis-dolichol + GDP + H(+). The catalysed reaction is an alpha-D-Man-(1-&gt;3)-beta-D-Man-(1-&gt;4)-beta-D-GlcNAc-(1-&gt;4)-alpha-D-GlcNAc-diphospho-di-trans,poly-cis-dolichol + GDP-alpha-D-mannose = an alpha-D-Man-(1-&gt;3)-[alpha-D-Man-(1-&gt;6)]-beta-D-Man-(1-&gt;4)-beta-D-GlcNAc-(1-&gt;4)-alpha-D-GlcNAc-diphospho-di-trans,poly-cis-dolichol + GDP + H(+). Its pathway is protein modification; protein glycosylation. In terms of biological role, mannosylates Man(2)GlcNAc(2)-dolichol diphosphate and Man(1)GlcNAc(2)-dolichol diphosphate to form Man(3)GlcNAc(2)-dolichol diphosphate. This chain is Alpha-1,3/1,6-mannosyltransferase alg-2 (alg-2), found in Neurospora crassa (strain ATCC 24698 / 74-OR23-1A / CBS 708.71 / DSM 1257 / FGSC 987).